A 306-amino-acid chain; its full sequence is tRNA-cytidine(32) 2-sulfurtransferase (306 aa).

Positions 1 to 25 are disordered; sequence MSAVISLPDPQPRAARDPRVAEREQ. Positions 14-25 are enriched in basic and acidic residues; it reads AARDPRVAEREQ. Residues 57 to 62 carry the PP-loop motif motif; sequence SGGKDS. [4Fe-4S] cluster is bound by residues Cys132, Cys135, and Cys223. A disordered region spans residues 286–306; sequence AHAWLAGSPADADADPETPTV. Residues 297-306 are compositionally biased toward acidic residues; that stretch reads ADADPETPTV.

Belongs to the TtcA family. As to quaternary structure, homodimer. Mg(2+) is required as a cofactor. Requires [4Fe-4S] cluster as cofactor.

The protein localises to the cytoplasm. The enzyme catalyses cytidine(32) in tRNA + S-sulfanyl-L-cysteinyl-[cysteine desulfurase] + AH2 + ATP = 2-thiocytidine(32) in tRNA + L-cysteinyl-[cysteine desulfurase] + A + AMP + diphosphate + H(+). It participates in tRNA modification. Catalyzes the ATP-dependent 2-thiolation of cytidine in position 32 of tRNA, to form 2-thiocytidine (s(2)C32). The sulfur atoms are provided by the cysteine/cysteine desulfurase (IscS) system. This is tRNA-cytidine(32) 2-sulfurtransferase from Stenotrophomonas maltophilia (strain K279a).